The following is a 110-amino-acid chain: Cytochrome c6 (110 aa).

An N-terminal signal peptide occupies residues M1 to A25. Heme c-binding residues include C39, C42, H43, and M83.

It belongs to the cytochrome c family. PetJ subfamily. Monomer. Binds 1 heme c group covalently per subunit.

It is found in the cellular thylakoid lumen. Functionally, functions as an electron carrier between membrane-bound cytochrome b6-f and photosystem I in oxygenic photosynthesis. The protein is Cytochrome c6 of Gloeothece citriformis (strain PCC 7424) (Cyanothece sp. (strain PCC 7424)).